A 368-amino-acid chain; its full sequence is Protein PXR1 (368 aa).

The interval 1–24 (MGLAGAKNKRKLGNDPNNTKWSRN) is disordered. The segment covering 15–24 (DPNNTKWSRN) has biased composition (polar residues). The G-patch domain maps to 25 to 79 (TDTFGQKILRAQGWQPGEYLGAKDAAHAEWHTEANTTHIRVTLKDDTLGLGAKRN). The interval 144–337 (TPDEEAEEIP…GYSTPIPTGS (194 aa)) is disordered. The span at 176–186 (RRSDKEDDKLG) shows a compositional bias: basic and acidic residues. 2 stretches are compositionally biased toward basic residues: residues 187–196 (KKEKKSKKRK) and 257–277 (DKKR…KKEK). Over residues 310–337 (PSSAPTPTDSNSSTPTGSGYSTPIPTGS) the composition is skewed to low complexity.

This sequence belongs to the PINX1 family.

The protein localises to the nucleus. It is found in the nucleolus. Its function is as follows. Involved in rRNA-processing at A0, A1 and A2 sites and negatively regulates telomerase. The sequence is that of Protein PXR1 (PXR1) from Chaetomium globosum (strain ATCC 6205 / CBS 148.51 / DSM 1962 / NBRC 6347 / NRRL 1970) (Soil fungus).